The sequence spans 613 residues: 4-hydroxy-3-methylbut-2-en-1-yl diphosphate synthase (flavodoxin) (613 aa).

The [4Fe-4S] cluster site is built by Cys521, Cys524, Cys555, and Glu562.

This sequence belongs to the IspG family. [4Fe-4S] cluster is required as a cofactor.

The enzyme catalyses (2E)-4-hydroxy-3-methylbut-2-enyl diphosphate + oxidized [flavodoxin] + H2O + 2 H(+) = 2-C-methyl-D-erythritol 2,4-cyclic diphosphate + reduced [flavodoxin]. It participates in isoprenoid biosynthesis; isopentenyl diphosphate biosynthesis via DXP pathway; isopentenyl diphosphate from 1-deoxy-D-xylulose 5-phosphate: step 5/6. Converts 2C-methyl-D-erythritol 2,4-cyclodiphosphate (ME-2,4cPP) into 1-hydroxy-2-methyl-2-(E)-butenyl 4-diphosphate. In Bacteroides thetaiotaomicron (strain ATCC 29148 / DSM 2079 / JCM 5827 / CCUG 10774 / NCTC 10582 / VPI-5482 / E50), this protein is 4-hydroxy-3-methylbut-2-en-1-yl diphosphate synthase (flavodoxin).